We begin with the raw amino-acid sequence, 334 residues long: MPKASLISIASYVPEKILTNFDFEKMVDTSDEWIVKRTGIEQRHIATTEITSDLGTKAAELAIKRSGLEKSQIDAVICATISPDHLCMPSTACKIAANLGLNFGITAFDISAACTGFIYLLELANSLIVSGAKKNVLIIGAEKLSSIIDYTDRSTCILFGDGAGAAVISASEENEIIDIHTASDGRQAELLITPGCGSAFPASDETLKNRLNFIHMSGNEVFKIAVQTLSKSVIEILHANKMQSEDIDFFIPHQANIRIIDAVKNRLNFTDEQCVLTVAKYGNTSSASIPMAINDAYEDGRIKNGSVLLLDAFGGGFTWGSAILKFGGRNFSDL.

Active-site residues include cysteine 114 and histidine 253. The segment at 254-258 (QANIR) is ACP-binding. The active site involves asparagine 283.

Belongs to the thiolase-like superfamily. FabH family. In terms of assembly, homodimer.

It localises to the cytoplasm. The enzyme catalyses malonyl-[ACP] + acetyl-CoA + H(+) = 3-oxobutanoyl-[ACP] + CO2 + CoA. It participates in lipid metabolism; fatty acid biosynthesis. Catalyzes the condensation reaction of fatty acid synthesis by the addition to an acyl acceptor of two carbons from malonyl-ACP. Catalyzes the first condensation reaction which initiates fatty acid synthesis and may therefore play a role in governing the total rate of fatty acid production. Possesses both acetoacetyl-ACP synthase and acetyl transacylase activities. Its substrate specificity determines the biosynthesis of branched-chain and/or straight-chain of fatty acids. This is Beta-ketoacyl-[acyl-carrier-protein] synthase III from Campylobacter concisus (strain 13826).